Consider the following 645-residue polypeptide: 1-deoxy-D-xylulose-5-phosphate synthase 2 (645 aa).

Thiamine diphosphate-binding positions include His79 and 120-122; that span reads GHS. Residue Asp151 coordinates Mg(2+). Residues 152–153, Asn180, Tyr291, and Glu373 contribute to the thiamine diphosphate site; that span reads GS. Asn180 serves as a coordination point for Mg(2+).

It belongs to the transketolase family. DXPS subfamily. Homodimer. Mg(2+) serves as cofactor. It depends on thiamine diphosphate as a cofactor.

It carries out the reaction D-glyceraldehyde 3-phosphate + pyruvate + H(+) = 1-deoxy-D-xylulose 5-phosphate + CO2. It participates in metabolic intermediate biosynthesis; 1-deoxy-D-xylulose 5-phosphate biosynthesis; 1-deoxy-D-xylulose 5-phosphate from D-glyceraldehyde 3-phosphate and pyruvate: step 1/1. Functionally, catalyzes the acyloin condensation reaction between C atoms 2 and 3 of pyruvate and glyceraldehyde 3-phosphate to yield 1-deoxy-D-xylulose-5-phosphate (DXP). The sequence is that of 1-deoxy-D-xylulose-5-phosphate synthase 2 from Rhodospirillum rubrum (strain ATCC 11170 / ATH 1.1.1 / DSM 467 / LMG 4362 / NCIMB 8255 / S1).